The sequence spans 526 residues: GMP synthase [glutamine-hydrolyzing] (526 aa).

The 197-residue stretch at K3–D199 folds into the Glutamine amidotransferase type-1 domain. C83 functions as the Nucleophile in the catalytic mechanism. Residues H174 and E176 contribute to the active site. The 193-residue stretch at W200–R392 folds into the GMPS ATP-PPase domain. S227–S233 lines the ATP pocket.

Homodimer.

It carries out the reaction XMP + L-glutamine + ATP + H2O = GMP + L-glutamate + AMP + diphosphate + 2 H(+). The protein operates within purine metabolism; GMP biosynthesis; GMP from XMP (L-Gln route): step 1/1. In terms of biological role, catalyzes the synthesis of GMP from XMP. The chain is GMP synthase [glutamine-hydrolyzing] from Ehrlichia canis (strain Jake).